The primary structure comprises 274 residues: Type II restriction enzyme XamI (274 aa).

It catalyses the reaction Endonucleolytic cleavage of DNA to give specific double-stranded fragments with terminal 5'-phosphates.. In terms of biological role, a P subtype restriction enzyme that recognizes the double-stranded sequence 5'-GTCGAC-3' and cleaves after G-1. This Xanthomonas campestris pv. amaranthicola protein is Type II restriction enzyme XamI (xamIR).